Consider the following 160-residue polypeptide: MNVVQGNIESKNAKIAIVVSRFNSFLVESLLEGAVDTLKRFGQVSDENITVVRVPGAVELPLAARRVAASGKFDGIIALGAVIRGGTPHFDFVAGECNKGLAQVALEFDLPVSFGVLTTDTIEQAIERSGTKAGNKGGEAALGLLEMVNVLQELEQQLQD.

5-amino-6-(D-ribitylamino)uracil-binding positions include phenylalanine 22, 57–59 (AVE), and 81–83 (AVI). 86-87 (GT) serves as a coordination point for (2S)-2-hydroxy-3-oxobutyl phosphate. The active-site Proton donor is histidine 89. Position 114 (phenylalanine 114) interacts with 5-amino-6-(D-ribitylamino)uracil. Arginine 128 is a binding site for (2S)-2-hydroxy-3-oxobutyl phosphate.

This sequence belongs to the DMRL synthase family. As to quaternary structure, forms an icosahedral capsid composed of 60 subunits, arranged as a dodecamer of pentamers.

The catalysed reaction is (2S)-2-hydroxy-3-oxobutyl phosphate + 5-amino-6-(D-ribitylamino)uracil = 6,7-dimethyl-8-(1-D-ribityl)lumazine + phosphate + 2 H2O + H(+). It participates in cofactor biosynthesis; riboflavin biosynthesis; riboflavin from 2-hydroxy-3-oxobutyl phosphate and 5-amino-6-(D-ribitylamino)uracil: step 1/2. Functionally, catalyzes the formation of 6,7-dimethyl-8-ribityllumazine by condensation of 5-amino-6-(D-ribitylamino)uracil with 3,4-dihydroxy-2-butanone 4-phosphate. This is the penultimate step in the biosynthesis of riboflavin. This is 6,7-dimethyl-8-ribityllumazine synthase from Shewanella sediminis (strain HAW-EB3).